We begin with the raw amino-acid sequence, 324 residues long: Major capsid protein (324 aa).

Positions 1 to 14 (MEQTQKLKLNLQHF) are excised as a propeptide.

Belongs to the HK97 phage major capsid protein family. In terms of assembly, forms homopentamers and homohexamers in the mature capsid forming a 63 nm icosahedral head with T=7 architecture. The procapsid is made up of hexamers and pentamers of this subunit. There are seven subunits in the asymmetric unit in the T=7 procapsid. Found in the procapsid with the scaffold protein in a 2:1 capsid protein:scaffold protein molecular ratio. The N-terminus is cleaved by ribosomal processing protease Prp.

The protein localises to the virion. Functionally, assembles to form an icosahedral capsid, as well as procapsid, with T=7 icosahedral symmetry. The sequence is that of Major capsid protein from Staphylococcus aureus.